We begin with the raw amino-acid sequence, 67 residues long: DNA-directed RNA polymerase subunit omega (67 aa).

It belongs to the RNA polymerase subunit omega family. As to quaternary structure, the RNAP catalytic core consists of 2 alpha, 1 beta, 1 beta' and 1 omega subunit. When a sigma factor is associated with the core the holoenzyme is formed, which can initiate transcription.

It carries out the reaction RNA(n) + a ribonucleoside 5'-triphosphate = RNA(n+1) + diphosphate. Functionally, promotes RNA polymerase assembly. Latches the N- and C-terminal regions of the beta' subunit thereby facilitating its interaction with the beta and alpha subunits. This is DNA-directed RNA polymerase subunit omega from Delftia acidovorans (strain DSM 14801 / SPH-1).